The following is a 154-amino-acid chain: Myoglobin (154 aa).

Positions 2-148 (GLSDGEWHLV…FRNDIAAKIK (147 aa)) constitute a Globin domain. Position 4 is a phosphoserine (Ser-4). Position 65 (His-65) interacts with nitrite. Residue His-65 coordinates O2. Thr-68 carries the post-translational modification Phosphothreonine. Residue His-94 participates in heme b binding.

It belongs to the globin family. In terms of assembly, monomeric.

It is found in the cytoplasm. The protein resides in the sarcoplasm. The enzyme catalyses Fe(III)-heme b-[protein] + nitric oxide + H2O = Fe(II)-heme b-[protein] + nitrite + 2 H(+). It catalyses the reaction H2O2 + AH2 = A + 2 H2O. Functionally, monomeric heme protein which primary function is to store oxygen and facilitate its diffusion within muscle tissues. Reversibly binds oxygen through a pentacoordinated heme iron and enables its timely and efficient release as needed during periods of heightened demand. Depending on the oxidative conditions of tissues and cells, and in addition to its ability to bind oxygen, it also has a nitrite reductase activity whereby it regulates the production of bioactive nitric oxide. Under stress conditions, like hypoxia and anoxia, it also protects cells against reactive oxygen species thanks to its pseudoperoxidase activity. In Pusa sibirica (Baikal seal), this protein is Myoglobin (MB).